A 361-amino-acid chain; its full sequence is tRNA-specific 2-thiouridylase MnmA (361 aa).

Residues 6–13 (AMSGGVDS) and L32 contribute to the ATP site. C101 functions as the Nucleophile in the catalytic mechanism. C101 and C194 are disulfide-bonded. G125 contributes to the ATP binding site. Positions 144-146 (KDQ) are interaction with tRNA. Catalysis depends on C194, which acts as the Cysteine persulfide intermediate.

It belongs to the MnmA/TRMU family.

Its subcellular location is the cytoplasm. The enzyme catalyses S-sulfanyl-L-cysteinyl-[protein] + uridine(34) in tRNA + AH2 + ATP = 2-thiouridine(34) in tRNA + L-cysteinyl-[protein] + A + AMP + diphosphate + H(+). Catalyzes the 2-thiolation of uridine at the wobble position (U34) of tRNA, leading to the formation of s(2)U34. The chain is tRNA-specific 2-thiouridylase MnmA from Corynebacterium aurimucosum (strain ATCC 700975 / DSM 44827 / CIP 107346 / CN-1) (Corynebacterium nigricans).